Here is a 598-residue protein sequence, read N- to C-terminus: Elongation factor 4 (598 aa).

Residues 2–184 (KNIRNFSIIA…EIVRCIPPPV (183 aa)) enclose the tr-type G domain. Residues 14–19 (DHGKST) and 131–134 (NKID) each bind GTP.

Belongs to the TRAFAC class translation factor GTPase superfamily. Classic translation factor GTPase family. LepA subfamily.

The protein resides in the cell inner membrane. The catalysed reaction is GTP + H2O = GDP + phosphate + H(+). Required for accurate and efficient protein synthesis under certain stress conditions. May act as a fidelity factor of the translation reaction, by catalyzing a one-codon backward translocation of tRNAs on improperly translocated ribosomes. Back-translocation proceeds from a post-translocation (POST) complex to a pre-translocation (PRE) complex, thus giving elongation factor G a second chance to translocate the tRNAs correctly. Binds to ribosomes in a GTP-dependent manner. The sequence is that of Elongation factor 4 from Psychromonas ingrahamii (strain DSM 17664 / CCUG 51855 / 37).